A 524-amino-acid chain; its full sequence is Cytochrome P450 monooxygenase alt1 (524 aa).

Residues 24–44 (IANMLSVIAFSICISPIVYFL) form a helical membrane-spanning segment. Cys-469 contacts heme.

It belongs to the cytochrome P450 family. Heme is required as a cofactor.

It is found in the membrane. It functions in the pathway secondary metabolite biosynthesis. Functionally, cytochrome P450 monooxygenase; part of the gene cluster that mediates the biosynthesis of alternapyrone derivatives. Alternapyrone is a decaketide with octa-methylation from methionine on every C2 unit except the third unit. All the domains in the polyketide synthase alt5 are apparently involved in alternapyrone synthesis, that is, the 8 CMeT, 7 KR, 7 DH, and 4 ER reactions in the 9 KS-mediated condensation steps required for alternapyrone synthesis. the alternapyrone produced by alt5 might be intensively modified by cytochrome P450 monooxygenases alt1, alt2 and alt3 and FAD-dependent oxidoreductase alt4 present in the alt gene cluster. This is Cytochrome P450 monooxygenase alt1 from Alternaria solani.